The following is a 461-amino-acid chain: Gram-negative bacteria-binding protein 2 (461 aa).

A signal peptide spans 1 to 20; that stretch reads MRWEFLPCLLLLISNNKIFG. One can recognise a CBM39 domain in the interval 21–115; sequence FKVPSINFEM…TRVIINTRLL (95 aa). 4 N-linked (GlcNAc...) asparagine glycosylation sites follow: Asn-71, Asn-170, Asn-177, and Asn-364. Positions 179-461 constitute a GH16 domain; sequence TTWKHDIRQR…VIDYVRVYAE (283 aa).

Belongs to the insect beta-1,3-glucan binding protein family.

The protein localises to the secreted. Involved in the recognition of invading microorganisms. Binds specifically to beta-1,3-glucan and activates the phenoloxidase cascade. This Drosophila melanogaster (Fruit fly) protein is Gram-negative bacteria-binding protein 2.